The primary structure comprises 149 residues: Myosin, essential light chain (149 aa).

2 EF-hand domains span residues 7–42 (SMID…FGLN) and 79–114 (GSYE…LGEK).

As to quaternary structure, myosin is a hexamer of 2 heavy chains and 4 light chains (two regulatory light chains and two essential light chains).

The sequence is that of Myosin, essential light chain from Branchiostoma floridae (Florida lancelet).